A 114-amino-acid polypeptide reads, in one-letter code: Somatostatin-1A (114 aa).

The first 24 residues, 1–24 (MLSTRIQCALALLSLALAVCSVSA), serve as a signal peptide directing secretion. Residues 25-88 (APTDAKLRQL…KDEVRLELER (64 aa)) constitute a propeptide that is removed on maturation. Cys103 and Cys114 are disulfide-bonded.

Belongs to the somatostatin family.

The protein resides in the secreted. Functionally, somatostatin inhibits the release of somatotropin. In Carassius auratus (Goldfish), this protein is Somatostatin-1A (sst1a).